A 962-amino-acid chain; its full sequence is Glycine dehydrogenase (decarboxylating) (962 aa).

An N6-(pyridoxal phosphate)lysine modification is found at lysine 709.

Belongs to the GcvP family. The glycine cleavage system is composed of four proteins: P, T, L and H. The cofactor is pyridoxal 5'-phosphate.

It catalyses the reaction N(6)-[(R)-lipoyl]-L-lysyl-[glycine-cleavage complex H protein] + glycine + H(+) = N(6)-[(R)-S(8)-aminomethyldihydrolipoyl]-L-lysyl-[glycine-cleavage complex H protein] + CO2. Its function is as follows. The glycine cleavage system catalyzes the degradation of glycine. The P protein binds the alpha-amino group of glycine through its pyridoxal phosphate cofactor; CO(2) is released and the remaining methylamine moiety is then transferred to the lipoamide cofactor of the H protein. This chain is Glycine dehydrogenase (decarboxylating), found in Shewanella putrefaciens (strain CN-32 / ATCC BAA-453).